A 458-amino-acid chain; its full sequence is tRNA modification GTPase MnmE (458 aa).

Positions 22, 84, and 123 each coordinate (6S)-5-formyl-5,6,7,8-tetrahydrofolate. Residues 220-379 form the TrmE-type G domain; the sequence is GIATAIIGRP…LEKAIADLFF (160 aa). Residue N230 participates in K(+) binding. GTP contacts are provided by residues 230 to 235, 249 to 255, and 274 to 277; these read NVGKSS, TDIAGTT, and DTAG. Residue S234 participates in Mg(2+) binding. Residues T249, I251, and T254 each contribute to the K(+) site. A Mg(2+)-binding site is contributed by T255. K458 provides a ligand contact to (6S)-5-formyl-5,6,7,8-tetrahydrofolate.

This sequence belongs to the TRAFAC class TrmE-Era-EngA-EngB-Septin-like GTPase superfamily. TrmE GTPase family. In terms of assembly, homodimer. Heterotetramer of two MnmE and two MnmG subunits. K(+) is required as a cofactor.

It localises to the cytoplasm. In terms of biological role, exhibits a very high intrinsic GTPase hydrolysis rate. Involved in the addition of a carboxymethylaminomethyl (cmnm) group at the wobble position (U34) of certain tRNAs, forming tRNA-cmnm(5)s(2)U34. This is tRNA modification GTPase MnmE from Bacillus cereus (strain ZK / E33L).